A 225-amino-acid polypeptide reads, in one-letter code: MKNIEKLEQSLTYEFKDKNLLIHALTHKSFKKSYNNERLEFLGDAVLDLVVGEYLFHKFTKDAEGDLSKLRAALVNEKSFAKIANSLNLGDFIFMSVAEENNGGKEKPSILSDALEAIIGAIHLEAGFEFAKTIALRLMEKNFPQIDAKILIKDYKTKLQEITQGKIGQTPQYETVRAFGPDHLKQFEIALMLDGKELARAIAGSKKEAQQMAAKIALEKLGSLQ.

Residues 4-127 (IEKLEQSLTY…IIGAIHLEAG (124 aa)) form the RNase III domain. E40 serves as a coordination point for Mg(2+). The active site involves D44. Mg(2+) contacts are provided by D113 and E116. E116 is a catalytic residue. The 70-residue stretch at 154 to 223 (DYKTKLQEIT…AKIALEKLGS (70 aa)) folds into the DRBM domain.

It belongs to the ribonuclease III family. In terms of assembly, homodimer. Mg(2+) is required as a cofactor.

The protein localises to the cytoplasm. The catalysed reaction is Endonucleolytic cleavage to 5'-phosphomonoester.. Its function is as follows. Digests double-stranded RNA. Involved in the processing of primary rRNA transcript to yield the immediate precursors to the large and small rRNAs (23S and 16S). Processes some mRNAs, and tRNAs when they are encoded in the rRNA operon. Processes pre-crRNA and tracrRNA of type II CRISPR loci if present in the organism. The polypeptide is Ribonuclease 3 (Campylobacter jejuni subsp. doylei (strain ATCC BAA-1458 / RM4099 / 269.97)).